Here is an 855-residue protein sequence, read N- to C-terminus: Beclin-1-like protein B (855 aa).

4 disordered regions span residues 92–212 (FGKR…GSLS), 236–271 (LVADINNNNNSVNKDNNTTISSSTVTTSNSISESNN), 294–380 (ATIP…QKPR), and 407–475 (VDGG…QQQP). 2 stretches are compositionally biased toward low complexity: residues 99 to 123 (TQSNSTTPTTPATPTATPTSSSLSL) and 131 to 143 (QQQQQQQQQQQQT). Over residues 144-156 (FNDQSKLTATTPT) the composition is skewed to polar residues. A compositionally biased stretch (low complexity) spans 177–200 (HSNNSSNGSDHGGNVNTTGVSPSS). Over residues 294–348 (ATIPTTTTTSTPTTPSTVGGTTPSPPSSSSSSSSSSSVITSPISRISPSNITSPS) the composition is skewed to low complexity. Composition is skewed to polar residues over residues 368–377 (LNISQVSSPQ) and 413–445 (SGTESTSMTNHHSSFLNQSTLPLGSSPVQTTPP). Positions 446–474 (LLSNSMNNSTNNLQSLQQQQQQQQQQQQQ) are enriched in low complexity. The stretch at 538-595 (EKGKTEEDLEELGKEMTLLCEEEEQLRLMIENTHQERKEVEQLTLQLQDRIATLKSLE) forms a coiled coil. The interval 826–855 (LNNNQNNNNINNNNNNNINNNNNNNVNKRN) is disordered.

The protein belongs to the beclin family.

It localises to the endosome membrane. Its function is as follows. Involved in autophagy. May be required to recruit the atg8-phosphatidylinositol conjugate and the atg12-atg5 conjugate to the pre-autophagosomal structure. The sequence is that of Beclin-1-like protein B (atg6B) from Dictyostelium discoideum (Social amoeba).